Consider the following 361-residue polypeptide: 3-dehydroquinate synthase (361 aa).

Residues 72–77, 130–131, K142, and K151 each bind NAD(+); these read SGEKEK and TT. Zn(2+) is bound by residues E184, H247, and H264.

The protein belongs to the sugar phosphate cyclases superfamily. Dehydroquinate synthase family. The cofactor is Co(2+). Zn(2+) serves as cofactor. It depends on NAD(+) as a cofactor.

It is found in the cytoplasm. The catalysed reaction is 7-phospho-2-dehydro-3-deoxy-D-arabino-heptonate = 3-dehydroquinate + phosphate. Its pathway is metabolic intermediate biosynthesis; chorismate biosynthesis; chorismate from D-erythrose 4-phosphate and phosphoenolpyruvate: step 2/7. In terms of biological role, catalyzes the conversion of 3-deoxy-D-arabino-heptulosonate 7-phosphate (DAHP) to dehydroquinate (DHQ). In Bacillus cereus (strain AH820), this protein is 3-dehydroquinate synthase.